The following is a 295-amino-acid chain: Ubiquinol-cytochrome c reductase complex assembly factor 1 (295 aa).

Belongs to the CBP3 family. Interacts with UQCC2. Interacts with UQCC3. Forms a complex, named COMB/coordinator of mitochondrial CYTB biogenesis, composed of UQCC1, UQCC2, UQCC4, UQCC5 and UQCC6; stabilizes nascent cytochrome b/MT-CYB and promotes its membrane insertion. Forms a complex, named COMA, composed of UQCC1, UQCC2 and UQCC4; activates MT-CYB translation. Forms a complex, named COMC, composed of UQCC1, UQCC2; UQCC3 and UQCC4; mediates MT-CYB hemylation and association with the first nuclear-encoded CIII subunit UQCRQ. As to expression, in the brain it is restricted to the olfactory bulb, the hippocampus, the piriform cortex and the Purkinje cells.

The protein localises to the mitochondrion inner membrane. Its subcellular location is the cytoplasmic vesicle. Its function is as follows. Required for the assembly of the ubiquinol-cytochrome c reductase complex (mitochondrial respiratory chain complex III or cytochrome b-c1 complex). Involved in cytochrome b translation and/or stability. This Mus musculus (Mouse) protein is Ubiquinol-cytochrome c reductase complex assembly factor 1 (Uqcc1).